Reading from the N-terminus, the 208-residue chain is Histone H1.3 (208 aa).

Ser2 carries the post-translational modification N-acetylserine. Positions 37–113 (AHPPYINMVT…GASGRFRVTE (77 aa)) constitute an H15 domain. Residues 113 to 208 (EKKAAAAKKP…PAKKAVAPKT (96 aa)) are disordered. Composition is skewed to basic residues over residues 148–158 (KAKKTTATKTK) and 165–191 (KKVK…KSAP). Positions 192-208 (KKAAAAKPAKKAVAPKT) are enriched in low complexity.

It belongs to the histone H1/H5 family.

The protein resides in the nucleus. Its subcellular location is the chromosome. Histones H1 are necessary for the condensation of nucleosome chains into higher-order structures. This is Histone H1.3 (hil-3) from Caenorhabditis elegans.